The sequence spans 146 residues: Large ribosomal subunit protein uL15 (146 aa).

The span at 1 to 13 (MKLHELRPAEGSR) shows a compositional bias: basic and acidic residues. The segment at 1-55 (MKLHELRPAEGSRKSPKRVGRGTGSGLGKTSARGENGQNSRSGGGVRPGFEGGQM) is disordered. Positions 42 to 52 (SGGGVRPGFEG) are enriched in gly residues.

The protein belongs to the universal ribosomal protein uL15 family. As to quaternary structure, part of the 50S ribosomal subunit.

Functionally, binds to the 23S rRNA. The polypeptide is Large ribosomal subunit protein uL15 (Clostridium tetani (strain Massachusetts / E88)).